A 577-amino-acid polypeptide reads, in one-letter code: Secreted LysM effector Lys4 (577 aa).

A signal peptide spans Met1 to Ala19. The LysM 1 domain occupies Ala38–Val85. Residues Thr96–Lys121 show a composition bias toward low complexity. The segment at Thr96–Pro135 is disordered. Polar residues predominate over residues Pro122–Pro135. 4 N-linked (GlcNAc...) asparagine glycosylation sites follow: Asn124, Asn140, Asn216, and Asn235. 3 consecutive LysM domains span residues Asn251–Val298, Lys328–Val375, and Gln408–Val455. The segment covering Ser464–Thr485 has biased composition (low complexity). Residues Ser464–Gly490 are disordered. The LysM 5 domain maps to Phe510 to Val558.

Belongs to the secreted LysM effector family.

Its function is as follows. Might have a role in sequestration of chitin oligosaccharides (breakdown products of fungal cell walls that are released during invasion and act as triggers of host immunity) to dampen host defense. The protein is Secreted LysM effector Lys4 of Pochonia chlamydosporia (strain 123) (Metacordyceps chlamydosporia).